The sequence spans 1046 residues: Multidrug resistance protein MexB (1046 aa).

The Cytoplasmic portion of the chain corresponds to Met-1 to Pro-9. A helical membrane pass occupies residues Ile-10–Leu-28. The Periplasmic portion of the chain corresponds to Ser-29 to Glu-339. The helical transmembrane segment at Val-340–Leu-359 threads the bilayer. The Cytoplasmic portion of the chain corresponds to Gln-360–Thr-365. A helical transmembrane segment spans residues Leu-366–Ala-385. The Periplasmic segment spans residues Phe-386–Asn-391. A helical membrane pass occupies residues Thr-392–Val-413. Over Glu-414–Ala-441 the chain is Cytoplasmic. The helical transmembrane segment at Leu-442–Gly-460 threads the bilayer. Topologically, residues Gly-461–Thr-473 are periplasmic. A helical transmembrane segment spans residues Ile-474–Met-496. Residues Leu-497–Arg-538 are Cytoplasmic-facing. A helical membrane pass occupies residues Ala-539–Thr-557. The Periplasmic portion of the chain corresponds to Arg-558–Gln-871. Residues Ala-872 to Tyr-891 traverse the membrane as a helical segment. Residues Glu-892–Pro-897 lie on the Cytoplasmic side of the membrane. Residues Phe-898–Met-917 traverse the membrane as a helical segment. Residues Arg-918 to Asp-923 lie on the Periplasmic side of the membrane. The chain crosses the membrane as a helical span at residues Val-924–Val-945. Residues Glu-946 to Pro-972 are Cytoplasmic-facing. The chain crosses the membrane as a helical span at residues Ile-973–Thr-991. Residues Gly-992–Gly-1004 are Periplasmic-facing. A helical membrane pass occupies residues Val-1005–Val-1027. Topologically, residues Ser-1028–Gln-1046 are cytoplasmic.

The protein belongs to the resistance-nodulation-cell division (RND) (TC 2.A.6) family. In terms of assembly, component of the MexAB-OprM multidrug efflux complex, composed of six MexA subunits forming a hexameric tube, binding to a MexB trimer, which interact with the trimeric OprM outer membrane channel protein. OprM is thought to not directly contact MexB; instead, MexA joins MexB and OprM by forming a funnel-like hexamer anchored to the inner membrane. MexA may initially form a hexameric ring complex with MexB prior to OprM, then OprM undergoes a conformational change as it contacts MexA, allowing the periplasmic gate to open. It is thought that, under high intracellular substrate concentration, MexB ejects substrate into the tunnel formed by MexA-OprM; as the substrate level declines, conformational changes in MexB cause efflux to reduce and stop and the complex shifts to the closed state. Acts as a substrate:proton antiporter and activity is enhanced significantly when in complex with MexA and OprM, in vitro.

The protein resides in the cell inner membrane. Its activity is regulated as follows. Export of antibiotics and solvents is dramatically decreased in the presence of the protonophore carbonyl cyanide m-chlorophenylhydrazone (CCCP), therefore may be driven by a proton gradient. Antibiotic efflux is inhibited by pyridopyrimidine derivatives, such as ABI-PP, acting by binding to a hydrophobic pocket in MexB. In terms of biological role, the inner membrane transporter component of the MexAB-OprM efflux system that confers multidrug resistance. Functions as the major efflux pump for n-hexane and p-xylene efflux. Has been shown in one study to be involved in the active efflux of the autoinducer N-(3-oxododecanoyl) homoserine lactone, thereby playing an indirect role in quorum-sensing; but has been shown in another study not to be involved in efflux of this autoinducer. Over-expression of the pump increases antibiotic and solvent efflux capacities. Implicated in the secretion of the siderophore pyoverdine. In Pseudomonas aeruginosa (strain ATCC 15692 / DSM 22644 / CIP 104116 / JCM 14847 / LMG 12228 / 1C / PRS 101 / PAO1), this protein is Multidrug resistance protein MexB (mexB).